A 392-amino-acid polypeptide reads, in one-letter code: Norsolorinic acid reductase B (392 aa).

Asp75 is a binding site for NADP(+). Catalysis depends on Tyr80, which acts as the Proton donor. NADP(+) is bound by residues 184–185, Gln210, 239–249, and 311–319; these read SD, GTLGQGSFQTE, and RKLEHIQGN. The disordered stretch occupies residues 242–263; the sequence is GQGSFQTEEGRKQREKDNPGRK. Over residues 249-261 the composition is skewed to basic and acidic residues; sequence EEGRKQREKDNPG.

It belongs to the aldo/keto reductase family. Aldo/keto reductase 2 subfamily.

It functions in the pathway mycotoxin biosynthesis. Norsolorinic acid reductase; part of the fragmented gene cluster that mediates the biosynthesis of dothistromin (DOTH), a polyketide toxin very similar in structure to the aflatoxin precursor, versicolorin B. The first step of the pathway is the conversion of acetate to norsolorinic acid (NOR) and requires the fatty acid synthase subunits hexA and hexB, as well as the polyketide synthase pksA. PksA combines a hexanoyl starter unit and 7 malonyl-CoA extender units to synthesize the precursor NOR. The hexanoyl starter unit is provided to the acyl-carrier protein (ACP) domain by the fungal fatty acid synthase hexA/hexB. The second step is the conversion of NOR to averantin (AVN) and requires the norsolorinic acid ketoreductase nor1, which catalyzes the dehydration of norsolorinic acid to form (1'S)-averantin. The cytochrome P450 monooxygenase avnA then catalyzes the hydroxylation of AVN to 5'hydroxyaverantin (HAVN). The next step is performed by adhA that transforms HAVN to averufin (AVF). Averufin might then be converted to hydroxyversicolorone by cypX and avfA. Hydroxyversicolorone is further converted versiconal hemiacetal acetate (VHA) by moxY. VHA is then the substrate for the versiconal hemiacetal acetate esterase est1 to yield versiconal (VAL). Versicolorin B synthase vbsA then converts VAL to versicolorin B (VERB) by closing the bisfuran ring. Then, the activity of the versicolorin B desaturase verB leads to versicolorin A (VERA). DotB, a predicted chloroperoxidase, may perform epoxidation of the A-ring of VERA. Alternatively, a cytochrome P450, such as cypX or avnA could catalyze this step. It is also possible that another, uncharacterized, cytochrome P450 enzyme is responsible for this step. Opening of the epoxide could potentially be achieved by the epoxide hydrolase epoA. However, epoA seems not to be required for DOTH biosynthesis, but other epoxide hydrolases may have the ability to complement this hydrolysis. Alternatively, opening of the epoxide ring could be achieved non-enzymatically. The next step is the deoxygenation of ring A to yield the 5,8-dihydroxyanthraquinone which is most likely catalyzed by the NADPH dehydrogenase encoded by ver1. The last stages of DOTH biosynthesis are proposed to involve hydroxylation of the bisfuran. OrdB and norB might have oxidative roles here. An alternative possibility is that cytochrome P450 monoogenases such as avnA and cypX might perform these steps in addition to previously proposed steps. The sequence is that of Norsolorinic acid reductase B from Dothistroma septosporum (strain NZE10 / CBS 128990) (Red band needle blight fungus).